A 541-amino-acid chain; its full sequence is Chaperonin GroEL 2 (541 aa).

Residues 29–32 (TLGP), 86–90 (DGTTT), glycine 413, 476–478 (NAA), and aspartate 492 contribute to the ATP site.

The protein belongs to the chaperonin (HSP60) family. In terms of assembly, forms a cylinder of 14 subunits composed of two heptameric rings stacked back-to-back. Interacts with the co-chaperonin GroES.

It localises to the secreted. The protein resides in the capsule. The protein localises to the cell surface. Its subcellular location is the cell wall. The catalysed reaction is ATP + H2O + a folded polypeptide = ADP + phosphate + an unfolded polypeptide.. Together with its co-chaperonin GroES, plays an essential role in assisting protein folding. The GroEL-GroES system forms a nano-cage that allows encapsulation of the non-native substrate proteins and provides a physical environment optimized to promote and accelerate protein folding. This chain is Chaperonin GroEL 2, found in Mycobacterium sp. (strain KMS).